The primary structure comprises 914 residues: Linoleate 13S-lipoxygenase 3-1, chloroplastic (914 aa).

A chloroplast-targeting transit peptide spans 1-83 (MALAKEIMGI…PEKAVRFKVR (83 aa)). A PLAT domain is found at 96–218 (LKETIVKHLD…DHPGKRIFFS (123 aa)). The Lipoxygenase domain maps to 221 to 914 (PYLPDETPAG…CRGVPNSVSI (694 aa)). Fe cation-binding residues include His574, His579, His765, Asn769, and Ile914.

Belongs to the lipoxygenase family. As to quaternary structure, monomer. The cofactor is Fe cation. In terms of tissue distribution, expressed in roots and leaves. Detected in tubers and flower buds.

It is found in the plastid. Its subcellular location is the chloroplast stroma. It localises to the chloroplast thylakoid. It carries out the reaction (9Z,12Z)-octadecadienoate + O2 = (13S)-hydroperoxy-(9Z,11E)-octadecadienoate. The enzyme catalyses (9Z,12Z,15Z)-octadecatrienoate + O2 = (13S)-hydroperoxy-(9Z,11E,15Z)-octadecatrienoate. It functions in the pathway lipid metabolism; oxylipin biosynthesis. Its function is as follows. Plant lipoxygenases may be involved in a number of diverse aspects of plant physiology including growth and development, pest resistance, and senescence or responses to wounding. Required for the regulation of wound-induced gene expression, but is not involved in the bulk production of jasmonate upon wounding. Catalyzes the hydroperoxidation of lipids containing a cis,cis-1,4-pentadiene structure. Linolenic acid is the preferred substrate, before linoleic and arachidonic acids. The chain is Linoleate 13S-lipoxygenase 3-1, chloroplastic (LOX3.1) from Solanum tuberosum (Potato).